The sequence spans 353 residues: Cyclin-dependent kinase-like 1 (353 aa).

A Protein kinase domain is found at 4–286 (YDRLSKLGEG…CSELMLHGIF (283 aa)). ATP contacts are provided by residues 10 to 18 (LGEGSYGVV) and lysine 33. Aspartate 126 acts as the Proton acceptor in catalysis. Positions 331 to 353 (GGNHGNNNNNGNGINRNFLPTIS) are disordered. The span at 335–347 (GNNNNNGNGINRN) shows a compositional bias: low complexity.

The protein belongs to the protein kinase superfamily. Ser/Thr protein kinase family. In terms of tissue distribution, specifically expressed in head and tail ciliated sensory neurons.

It localises to the cell projection. The protein resides in the cilium. It carries out the reaction L-seryl-[protein] + ATP = O-phospho-L-seryl-[protein] + ADP + H(+). It catalyses the reaction L-threonyl-[protein] + ATP = O-phospho-L-threonyl-[protein] + ADP + H(+). Functionally, modulates cilium assembly. This chain is Cyclin-dependent kinase-like 1, found in Caenorhabditis elegans.